Consider the following 295-residue polypeptide: Phosphatidylserine decarboxylase proenzyme (295 aa).

Catalysis depends on charge relay system; for autoendoproteolytic cleavage activity residues Asp-113, His-169, and Ser-256. Residue Ser-256 is the Schiff-base intermediate with substrate; via pyruvic acid; for decarboxylase activity of the active site. Ser-256 is subject to Pyruvic acid (Ser); by autocatalysis.

The protein belongs to the phosphatidylserine decarboxylase family. PSD-B subfamily. Prokaryotic type II sub-subfamily. Heterodimer of a large membrane-associated beta subunit and a small pyruvoyl-containing alpha subunit. It depends on pyruvate as a cofactor. Post-translationally, is synthesized initially as an inactive proenzyme. Formation of the active enzyme involves a self-maturation process in which the active site pyruvoyl group is generated from an internal serine residue via an autocatalytic post-translational modification. Two non-identical subunits are generated from the proenzyme in this reaction, and the pyruvate is formed at the N-terminus of the alpha chain, which is derived from the carboxyl end of the proenzyme. The autoendoproteolytic cleavage occurs by a canonical serine protease mechanism, in which the side chain hydroxyl group of the serine supplies its oxygen atom to form the C-terminus of the beta chain, while the remainder of the serine residue undergoes an oxidative deamination to produce ammonia and the pyruvoyl prosthetic group on the alpha chain. During this reaction, the Ser that is part of the protease active site of the proenzyme becomes the pyruvoyl prosthetic group, which constitutes an essential element of the active site of the mature decarboxylase.

Its subcellular location is the cell membrane. It catalyses the reaction a 1,2-diacyl-sn-glycero-3-phospho-L-serine + H(+) = a 1,2-diacyl-sn-glycero-3-phosphoethanolamine + CO2. It participates in phospholipid metabolism; phosphatidylethanolamine biosynthesis; phosphatidylethanolamine from CDP-diacylglycerol: step 2/2. In terms of biological role, catalyzes the formation of phosphatidylethanolamine (PtdEtn) from phosphatidylserine (PtdSer). This Clostridium botulinum (strain ATCC 19397 / Type A) protein is Phosphatidylserine decarboxylase proenzyme.